The chain runs to 1084 residues: Probable sucrose-phosphate synthase 1 (1084 aa).

Positions 25–46 (GGGGGGGGGGGGGGGGGGGGGV) are enriched in gly residues. A disordered region spans residues 25–61 (GGGGGGGGGGGGGGGGGGGGGVDPRSPAAGAASPRGP). Low complexity predominate over residues 48 to 61 (PRSPAAGAASPRGP).

It belongs to the glycosyltransferase 1 family. Homodimer or homotetramer. Expressed in leaves mesophyll cells, scutellum of germinating seedlings and pollen of immature inflorescences.

It carries out the reaction beta-D-fructose 6-phosphate + UDP-alpha-D-glucose = sucrose 6(F)-phosphate + UDP + H(+). Its pathway is glycan biosynthesis; sucrose biosynthesis; sucrose from D-fructose 6-phosphate and UDP-alpha-D-glucose: step 1/2. Its activity is regulated as follows. Activity is regulated by phosphorylation and moderated by concentration of metabolites and light. Functionally, plays a role in photosynthetic sucrose synthesis by catalyzing the rate-limiting step of sucrose biosynthesis from UDP-glucose and fructose- 6-phosphate. Involved in the regulation of carbon partitioning in the leaves of plants. May regulate the synthesis of sucrose and therefore play a major role as a limiting factor in the export of photoassimilates out of the leaf. Plays a role for sucrose availability that is essential for plant growth and fiber elongation. The polypeptide is Probable sucrose-phosphate synthase 1 (SPS1) (Oryza sativa subsp. indica (Rice)).